A 92-amino-acid chain; its full sequence is N(2)-fixation sustaining protein CowN (92 aa).

It belongs to the CowN family.

Functionally, is required to sustain N(2)-dependent growth in the presence of low levels of carbon monoxide (CO). Probably acts by protecting the N(2) fixation ability of the nitrogenase complex, which is inactivated in the presence of CO. This Rhodopseudomonas palustris (strain BisB18) protein is N(2)-fixation sustaining protein CowN.